The chain runs to 389 residues: Galactokinase (389 aa).

Residue 34-37 (EHTD) participates in substrate binding. Residues Ser-68 and 125–131 (GSGLSSS) contribute to the ATP site. Mg(2+) contacts are provided by Ser-131 and Glu-163. Catalysis depends on Asp-175, which acts as the Proton acceptor. Tyr-225 contributes to the substrate binding site.

This sequence belongs to the GHMP kinase family. GalK subfamily.

It is found in the cytoplasm. The catalysed reaction is alpha-D-galactose + ATP = alpha-D-galactose 1-phosphate + ADP + H(+). The protein operates within carbohydrate metabolism; galactose metabolism. Its function is as follows. Catalyzes the transfer of the gamma-phosphate of ATP to D-galactose to form alpha-D-galactose-1-phosphate (Gal-1-P). In Clostridium beijerinckii (strain ATCC 51743 / NCIMB 8052) (Clostridium acetobutylicum), this protein is Galactokinase.